Here is a 643-residue protein sequence, read N- to C-terminus: Protein disulfide-isomerase A4 (643 aa).

Positions 1-20 are cleaved as a signal peptide; the sequence is MKLRKAWLLVLLLALTQLLA. 2 consecutive Thioredoxin domains span residues 21–167 and 167–299; these read AASA…EVSQ and QPDW…EFLK. Positions 24 to 58 are disordered; it reads AEDAHEDASDSENPIEDDDDEEEDEEDEDDLEVKE. The segment covering 32–56 has biased composition (acidic residues); sequence SDSENPIEDDDDEEEDEEDEDDLEV. Positions 89-92 match the CXXC motif; the sequence is CGHC. 2 disulfide bridges follow: C89–C92 and C204–C207. K364 bears the N6-acetyllysine mark. In terms of domain architecture, Thioredoxin 3 spans 503–634; that stretch reads FKKGKLKPVI…LSKFIDEHAT (132 aa). Positions 553-556 match the CXXC motif; sequence CGHC. C553 and C556 form a disulfide bridge. A Prevents secretion from ER motif is present at residues 640–643; that stretch reads KEEL.

The protein belongs to the protein disulfide isomerase family. In terms of assembly, part of a large chaperone multiprotein complex comprising DNAJB11, HSP90B1, HSPA5, HYOU, PDIA2, PDIA4, PDIA6, PPIB, SDF2L1, UGGT1 and very small amounts of ERP29, but not, or at very low levels, CALR nor CANX. Component of a complex containing at least CRELD2, MANF, MATN3 and PDIA4. O-glycosylated.

The protein resides in the endoplasmic reticulum lumen. Its subcellular location is the melanosome. It catalyses the reaction Catalyzes the rearrangement of -S-S- bonds in proteins.. This is Protein disulfide-isomerase A4 (Pdia4) from Rattus norvegicus (Rat).